A 474-amino-acid polypeptide reads, in one-letter code: 3-isopropylmalate dehydratase large subunit (474 aa).

Positions 355, 415, and 418 each coordinate [4Fe-4S] cluster.

Belongs to the aconitase/IPM isomerase family. LeuC type 1 subfamily. In terms of assembly, heterodimer of LeuC and LeuD. It depends on [4Fe-4S] cluster as a cofactor.

It catalyses the reaction (2R,3S)-3-isopropylmalate = (2S)-2-isopropylmalate. Its pathway is amino-acid biosynthesis; L-leucine biosynthesis; L-leucine from 3-methyl-2-oxobutanoate: step 2/4. Its function is as follows. Catalyzes the isomerization between 2-isopropylmalate and 3-isopropylmalate, via the formation of 2-isopropylmaleate. This chain is 3-isopropylmalate dehydratase large subunit, found in Shewanella sp. (strain W3-18-1).